A 991-amino-acid polypeptide reads, in one-letter code: MLRLLFIVRLLFLMPLASSRSNHSEEVENLLKLKSTFGETKSDDVFKTWTHRNSACEFAGIVCNSDGNVVEINLGSRSLINRDDDGRFTDLPFDSICDLKLLEKLVLGNNSLRGQIGTNLGKCNRLRYLDLGINNFSGEFPAIDSLQLLEFLSLNASGISGIFPWSSLKDLKRLSFLSVGDNRFGSHPFPREILNLTALQWVYLSNSSITGKIPEGIKNLVRLQNLELSDNQISGEIPKEIVQLKNLRQLEIYSNDLTGKLPLGFRNLTNLRNFDASNNSLEGDLSELRFLKNLVSLGMFENRLTGEIPKEFGDFKSLAALSLYRNQLTGKLPRRLGSWTAFKYIDVSENFLEGQIPPYMCKKGVMTHLLMLQNRFTGQFPESYAKCKTLIRLRVSNNSLSGMIPSGIWGLPNLQFLDLASNYFEGNLTGDIGNAKSLGSLDLSNNRFSGSLPFQISGANSLVSVNLRMNKFSGIVPESFGKLKELSSLILDQNNLSGAIPKSLGLCTSLVDLNFAGNSLSEEIPESLGSLKLLNSLNLSGNKLSGMIPVGLSALKLSLLDLSNNQLTGSVPESLVSGSFEGNSGLCSSKIRYLRPCPLGKPHSQGKRKHLSKVDMCFIVAAILALFFLFSYVIFKIRRDKLNKTVQKKNDWQVSSFRLLNFNEMEIIDEIKSENIIGRGGQGNVYKVSLRSGETLAVKHIWCPESSHESFRSSTAMLSDGNNRSNNGEFEAEVATLSNIKHINVVKLFCSITCEDSKLLVYEYMPNGSLWEQLHERRGEQEIGWRVRQALALGAAKGLEYLHHGLDRPVIHRDVKSSNILLDEEWRPRIADFGLAKIIQADSVQRDFSAPLVKGTLGYIAPEYAYTTKVNEKSDVYSFGVVLMELVTGKKPLETDFGENNDIVMWVWSVSKETNREMMMKLIDTSIEDEYKEDALKVLTIALLCTDKSPQARPFMKSVVSMLEKIEPSYNKNSGEASYGESANDEITKVV.

The signal sequence occupies residues 1–19 (MLRLLFIVRLLFLMPLASS). Residues 20–616 (RSNHSEEVEN…KRKHLSKVDM (597 aa)) lie on the Extracellular side of the membrane. N-linked (GlcNAc...) asparagine glycosylation is present at Asn-22. LRR repeat units lie at residues 66 to 90 (DGNV…RFTD), 99 to 123 (LKLL…LGKC), 125 to 148 (RLRY…SLQL), 150 to 170 (EFLS…SLKD), 171 to 196 (LKRL…ILNL), 197 to 220 (TALQ…IKNL), 221 to 244 (VRLQ…IVQL), 246 to 267 (NLRQ…GFRN), 269 to 291 (TNLR…LRFL), 292 to 314 (KNLV…EFGD), 315 to 339 (FKSL…LGSW), 341 to 363 (AFKY…MCKK), 365 to 387 (VMTH…YAKC), 388 to 411 (KTLI…IWGL), 413 to 435 (NLQF…IGNA), 436 to 459 (KSLG…ISGA), 461 to 482 (SLVS…SFGK), 483 to 508 (LKEL…GLCT), 510 to 531 (LVDL…LGSL), 532 to 554 (KLLN…GLSA), and 555 to 578 (LKLS…LVSG). N-linked (GlcNAc...) asparagine glycans are attached at residues Asn-109, Asn-135, Asn-155, Asn-195, and Asn-206. N-linked (GlcNAc...) asparagine glycosylation is found at Asn-267 and Asn-278. Asn-397 and Asn-427 each carry an N-linked (GlcNAc...) asparagine glycan. An N-linked (GlcNAc...) asparagine glycan is attached at Asn-495. N-linked (GlcNAc...) asparagine glycosylation occurs at Asn-538. The helical transmembrane segment at 617–637 (CFIVAAILALFFLFSYVIFKI) threads the bilayer. Residues 638 to 991 (RRDKLNKTVQ…SANDEITKVV (354 aa)) lie on the Cytoplasmic side of the membrane. The Protein kinase domain occupies 671-970 (IKSENIIGRG…SMLEKIEPSY (300 aa)). ATP is bound by residues 677 to 685 (IGRGGQGNV) and Lys-699. Phosphotyrosine occurs at positions 762 and 801. Asp-814 acts as the Proton acceptor in catalysis. 2 positions are modified to phosphotyrosine: Tyr-859 and Tyr-866. Thr-867 bears the Phosphothreonine mark. The segment at 972–991 (KNSGEASYGESANDEITKVV) is disordered.

This sequence belongs to the protein kinase superfamily. Ser/Thr protein kinase family. In terms of tissue distribution, expressed in the endosperm of fertilized ovules.

The protein localises to the membrane. The catalysed reaction is L-seryl-[protein] + ATP = O-phospho-L-seryl-[protein] + ADP + H(+). It catalyses the reaction L-threonyl-[protein] + ATP = O-phospho-L-threonyl-[protein] + ADP + H(+). In terms of biological role, modulates the seed size by negatively regulating the cellularization of syncytial endosperm. The sequence is that of Receptor-like protein kinase HAIKU2 (IKU2) from Arabidopsis thaliana (Mouse-ear cress).